The following is a 274-amino-acid chain: Diaminopimelate epimerase (274 aa).

Substrate contacts are provided by Asn11 and Asn60. Cys69 acts as the Proton donor in catalysis. Substrate-binding positions include 70 to 71 (GN), Asn191, and 209 to 210 (ER). The active-site Proton acceptor is Cys218. 219–220 (GS) lines the substrate pocket.

It belongs to the diaminopimelate epimerase family. In terms of assembly, homodimer.

The protein localises to the cytoplasm. The catalysed reaction is (2S,6S)-2,6-diaminopimelate = meso-2,6-diaminopimelate. Its pathway is amino-acid biosynthesis; L-lysine biosynthesis via DAP pathway; DL-2,6-diaminopimelate from LL-2,6-diaminopimelate: step 1/1. Catalyzes the stereoinversion of LL-2,6-diaminopimelate (L,L-DAP) to meso-diaminopimelate (meso-DAP), a precursor of L-lysine and an essential component of the bacterial peptidoglycan. This Caldanaerobacter subterraneus subsp. tengcongensis (strain DSM 15242 / JCM 11007 / NBRC 100824 / MB4) (Thermoanaerobacter tengcongensis) protein is Diaminopimelate epimerase.